A 200-amino-acid chain; its full sequence is Integrin beta-1-binding protein 1 (200 aa).

Positions 1–10 (MFRKGKKRHS) are enriched in basic residues. The disordered stretch occupies residues 1 to 56 (MFRKGKKRHSSSSSQSSEISTKSKSVDSSLGGLSRSSTVASLDTDSTKSSGQSNNN). The short motif at 6-7 (KK) is the Nuclear localization signal element. A compositionally biased stretch (low complexity) spans 11–29 (SSSSQSSEISTKSKSVDSS). Polar residues predominate over residues 34–56 (SRSSTVASLDTDSTKSSGQSNNN). Threonine 38 carries the phosphothreonine; by CaMK2 modification. Phosphoserine is present on serine 41. In terms of domain architecture, PID spans 58 to 200 (DTCAEFRIKY…FDSVLTSEKP (143 aa)). The segment at 136–139 (YLII) is interaction with KRIT1. The segment at 139-141 (IRM) is interaction with ITGB1.

As to quaternary structure, interacts (via N-terminus and PTB domain) with ROCK1. Found in a complex, at least composed of ITGB1BP1, KRIT1 and RAP1A. Interacts (via C-terminal region) with ITGB1 (via C-terminal cytoplasmic tail); the interaction prevents talin TLN1 binding to ITGB1 and KRIT1 and ITGB1 compete for the same binding site. Interacts with KRIT1 (via N-terminal NPXY motif); the interaction induces the opening conformation of KRIT1 and KRIT1 and ITGB1 compete for the same binding site. Isoform 2 does not interact with ITGB1. Interacts with CDC42 (GTP- or GDP-bound form); the interaction is increased with the CDC42-membrane bound forms and prevents both CDC42 activation and cell spreading. Interacts (via C-terminal domain region) with NME2. Interacts with FERMT2 and RAC1. Phosphorylation at Thr-38 seems to enhance integrin alpha5beta1-mediated cell adhesion. The degree of phosphorylation is regulated by integrin-dependent cell-matrix interaction.

It is found in the nucleus. Its subcellular location is the cytoplasm. It localises to the cytoskeleton. The protein localises to the cell membrane. The protein resides in the cell projection. It is found in the lamellipodium. Its subcellular location is the ruffle. Key regulator of the integrin-mediated cell-matrix interaction signaling by binding to the ITGB1 cytoplasmic tail and preventing the activation of integrin alpha-5/beta-1 (heterodimer of ITGA5 and ITGB1) by talin or FERMT1. Plays a role in cell proliferation, differentiation, spreading, adhesion and migration in the context of mineralization and bone development and angiogenesis. Stimulates cellular proliferation in a fibronectin-dependent manner. Involved in the regulation of beta-1 integrin-containing focal adhesion (FA) site dynamics by controlling its assembly rate during cell adhesion; inhibits beta-1 integrin clustering within FA by directly competing with talin TLN1, and hence stimulates osteoblast spreading and migration in a fibronectin- and/or collagen-dependent manner. Acts as a guanine nucleotide dissociation inhibitor (GDI) by regulating Rho family GTPases during integrin-mediated cell matrix adhesion; reduces the level of active GTP-bound form of both CDC42 and RAC1 GTPases upon cell adhesion to fibronectin. Stimulates the release of active CDC42 from the membranes to maintain it in an inactive cytoplasmic pool. Participates in the translocation of the Rho-associated protein kinase ROCK1 to membrane ruffles at cell leading edges of the cell membrane, leading to an increase of myoblast cell migration on laminin. Plays a role in bone mineralization at a late stage of osteoblast differentiation; modulates the dynamic formation of focal adhesions into fibrillar adhesions, which are adhesive structures responsible for fibronectin deposition and fibrillogenesis. Plays a role in blood vessel development; acts as a negative regulator of angiogenesis by attenuating endothelial cell proliferation and migration, lumen formation and sprouting angiogenesis by promoting AKT phosphorylation and inhibiting ERK1/2 phosphorylation through activation of the Notch signaling pathway. Promotes transcriptional activity of the MYC promoter. This chain is Integrin beta-1-binding protein 1 (ITGB1BP1), found in Bos taurus (Bovine).